A 474-amino-acid polypeptide reads, in one-letter code: Cryptochrome DASH (474 aa).

A Photolyase/cryptochrome alpha/beta domain is found at 2–136; sequence DTAVVWFRDD…ALRQRWTHTL (135 aa). Positions 161-171 are enriched in basic and acidic residues; the sequence is EAAATVRDPRS. The segment at 161–202 is disordered; it reads EAAATVRDPRSAPETVPTPDGLTPGPVPTVESLGVSEPPTDD.

Belongs to the DNA photolyase class-1 family. FAD is required as a cofactor. It depends on (6R)-5,10-methylene-5,6,7,8-tetrahydrofolate as a cofactor.

Its function is as follows. May have a photoreceptor function. Binds DNA; probably functions as a transcriptional repressor. The polypeptide is Cryptochrome DASH (cry) (Natronomonas pharaonis (strain ATCC 35678 / DSM 2160 / CIP 103997 / JCM 8858 / NBRC 14720 / NCIMB 2260 / Gabara) (Halobacterium pharaonis)).